The chain runs to 189 residues: Cancer/testis antigen family 45 member A1 (189 aa).

Residues 1 to 23 (MTDKTEKVAVDPETVFKRPRECD) are compositionally biased toward basic and acidic residues. Disordered stretches follow at residues 1-27 (MTDK…SPSY) and 83-118 (RMMQ…SPKS).

Belongs to the CT45 family. Testis specific. Expressed in cancer cell lines.

Its subcellular location is the nucleus. This is Cancer/testis antigen family 45 member A1 from Homo sapiens (Human).